We begin with the raw amino-acid sequence, 283 residues long: Glutamate racemase (283 aa).

Substrate-binding positions include 28–29 (DS) and 60–61 (YG). C92 serves as the catalytic Proton donor/acceptor. 93-94 (NS) is a binding site for substrate. C204 acts as the Proton donor/acceptor in catalysis. 205 to 206 (TH) contacts substrate.

The protein belongs to the aspartate/glutamate racemases family.

It catalyses the reaction L-glutamate = D-glutamate. The protein operates within cell wall biogenesis; peptidoglycan biosynthesis. Provides the (R)-glutamate required for cell wall biosynthesis. The polypeptide is Glutamate racemase (Erwinia tasmaniensis (strain DSM 17950 / CFBP 7177 / CIP 109463 / NCPPB 4357 / Et1/99)).